Consider the following 220-residue polypeptide: MMAYLVFLGPPGAGKGTYAKRLQEITGIPHISTGDIFRDIVKKENDELGKKIKEIMERGELVPDELVNEVVKRRLSEKDCERGFILDGYPRTVAQAEFLDGFLKTQNKELTAAVLFEVPEEVVVQRLTARRICPKCGRIYNLISLPPKEDELCDDCKVKLVQREDDKEETVRHRYKVYLEKTQPVIDYYDKKGILKRVDGTIGIDNVIAEVLKIIGWSDK.

Residue glycine 12–threonine 17 coordinates ATP. Residues serine 32–valine 62 are NMP. Residues threonine 33, arginine 38, glutamate 60–valine 62, glycine 88–arginine 91, and glutamine 95 contribute to the AMP site. Residues alanine 129–aspartate 166 form an LID region. Arginine 130 lines the ATP pocket. Residues cysteine 133 and cysteine 136 each contribute to the Zn(2+) site. Isoleucine 139–tyrosine 140 is an ATP binding site. Residues cysteine 153 and cysteine 156 each coordinate Zn(2+). AMP contacts are provided by arginine 163 and arginine 174. Isoleucine 202 serves as a coordination point for ATP.

The protein belongs to the adenylate kinase family. As to quaternary structure, monomer.

It is found in the cytoplasm. It catalyses the reaction AMP + ATP = 2 ADP. The protein operates within purine metabolism; AMP biosynthesis via salvage pathway; AMP from ADP: step 1/1. In terms of biological role, catalyzes the reversible transfer of the terminal phosphate group between ATP and AMP. Plays an important role in cellular energy homeostasis and in adenine nucleotide metabolism. The chain is Adenylate kinase from Thermotoga maritima (strain ATCC 43589 / DSM 3109 / JCM 10099 / NBRC 100826 / MSB8).